Reading from the N-terminus, the 264-residue chain is Thymidylate synthase (264 aa).

Arginine 21 is a binding site for dUMP. Histidine 51 is a (6R)-5,10-methylene-5,6,7,8-tetrahydrofolate binding site. Position 126-127 (126-127 (RR)) interacts with dUMP. Cysteine 146 (nucleophile) is an active-site residue. Residues 166–169 (RSAD), asparagine 177, and 207–209 (HLY) contribute to the dUMP site. Residue aspartate 169 participates in (6R)-5,10-methylene-5,6,7,8-tetrahydrofolate binding. Alanine 263 provides a ligand contact to (6R)-5,10-methylene-5,6,7,8-tetrahydrofolate.

Belongs to the thymidylate synthase family. Bacterial-type ThyA subfamily. As to quaternary structure, homodimer.

The protein resides in the cytoplasm. The enzyme catalyses dUMP + (6R)-5,10-methylene-5,6,7,8-tetrahydrofolate = 7,8-dihydrofolate + dTMP. It functions in the pathway pyrimidine metabolism; dTTP biosynthesis. Catalyzes the reductive methylation of 2'-deoxyuridine-5'-monophosphate (dUMP) to 2'-deoxythymidine-5'-monophosphate (dTMP) while utilizing 5,10-methylenetetrahydrofolate (mTHF) as the methyl donor and reductant in the reaction, yielding dihydrofolate (DHF) as a by-product. This enzymatic reaction provides an intracellular de novo source of dTMP, an essential precursor for DNA biosynthesis. The polypeptide is Thymidylate synthase (Rhizobium johnstonii (strain DSM 114642 / LMG 32736 / 3841) (Rhizobium leguminosarum bv. viciae)).